Here is a 57-residue protein sequence, read N- to C-terminus: Somatostatin-2 (57 aa).

The disordered stretch occupies residues 1-26 (GRSHMVLNSALEGARGGPGGEEIPER).

It belongs to the somatostatin family.

The protein resides in the secreted. Its function is as follows. Somatostatin inhibits the release of somatotropin. The chain is Somatostatin-2 (sst2) from Piaractus mesopotamicus (Small-scaled pacu).